We begin with the raw amino-acid sequence, 70 residues long: U2-agatoxin-Ao1p (70 aa).

Positions 1-20 are cleaved as a signal peptide; it reads MRAIISLILISAMVFSMIAA. Positions 21 to 34 are excised as a propeptide; that stretch reads VPXXEGLQLSEDER. 3 disulfide bridges follow: Cys37–Cys53, Cys44–Cys58, and Cys52–Cys68. Leu69 is subject to Leucine amide.

The protein belongs to the neurotoxin 01 (U2-agtx) family. Expressed by the venom gland.

The protein localises to the secreted. Functionally, insect active toxin causing rapid but reversible paralysis in crickets. No activity shown in mammals. Does not show effect on mammalian voltage-gated calcium channels. The chain is U2-agatoxin-Ao1p from Agelena orientalis (Funnel-web spider).